The chain runs to 497 residues: Glucose-6-phosphate 1-dehydrogenase (497 aa).

NADP(+) contacts are provided by residues 15-22, Arg-49, and Lys-153; that span reads GASGDLSK. Residues Lys-153, 183–187, Glu-221, and Asp-240 each bind D-glucose 6-phosphate; that span reads HYLGK. His-245 acts as the Proton acceptor in catalysis. Arg-336 provides a ligand contact to NADP(+). D-glucose 6-phosphate is bound at residue Lys-339. NADP(+)-binding residues include Lys-345, Arg-349, and Arg-371. Residue Gln-373 coordinates D-glucose 6-phosphate. NADP(+) is bound by residues 379–381, 399–401, and Arg-466; these read YLK and DLT.

Belongs to the glucose-6-phosphate dehydrogenase family.

The enzyme catalyses D-glucose 6-phosphate + NADP(+) = 6-phospho-D-glucono-1,5-lactone + NADPH + H(+). Its pathway is carbohydrate degradation; pentose phosphate pathway; D-ribulose 5-phosphate from D-glucose 6-phosphate (oxidative stage): step 1/3. Its function is as follows. Catalyzes the rate-limiting step of the oxidative pentose-phosphate pathway, which represents a route for the dissimilation of carbohydrates besides glycolysis. The main function of this enzyme is to provide reducing power (NADPH) and pentose phosphates for fatty acid and nucleic acid synthesis. The sequence is that of Glucose-6-phosphate 1-dehydrogenase (ZWF) from Kluyveromyces lactis (strain ATCC 8585 / CBS 2359 / DSM 70799 / NBRC 1267 / NRRL Y-1140 / WM37) (Yeast).